The following is a 492-amino-acid chain: MCMEAEPPSPPAQQQEQVNPPLCKAQNPKPARLYRLVLLFVAGSLAAWTFHALSSTNLVWKLRQLHHLPTAHYLQTRDEFALYSVEELNAFKEFYDKSVSDSVGASYTEAEQTNIKEALGALRMAQDLYLAGKDDKAARLFEHALALAPRHPEVLLRYGEFLEHNQRNIVLADQYYFQALTISPSNSEALANRQRTADVVQSLDERRLESLDSKRDALSAIHESNGALRRAKKEAYFQHIYHSVGIEGNTMTLAQTRSILETRMAVDGKSIDEHNEILGMDLAMKYINASLVQKIDITIKDILELHRRVLGHVDPIEGGEFRRNQVYVGGHIPPGPGDLALLMQRFERWLNSEHSSTLHPVNYAALAHYKLVHIHPFVDGNGRTSRLLMNTLLMRAGYPPVIIPKQQRSKYYHFLKLANEGDIRPFVRFIADCTEKTLDLYLWATSDLPQQIPMLIQTESEAGERLAQMQSPNVAQRSSILEFYESGSGDIP.

Over residues 1 to 17 (MCMEAEPPSPPAQQQEQ) the composition is skewed to low complexity. The segment at 1–21 (MCMEAEPPSPPAQQQEQVNPP) is disordered. Residues 33–55 (LYRLVLLFVAGSLAAWTFHALSS) traverse the membrane as a helical segment. 2 TPR repeats span residues 118 to 151 (ALGALRMAQDLYLAGKDDKAARLFEHALALAPRH) and 152 to 186 (PEVLLRYGEFLEHNQRNIVLADQYYFQALTISPSN). The Inhibitory (S/T)XXXE(G/N) motif signature appears at 243–248 (SVGIEG). ATP contacts are provided by residues Glu247 and 328 to 331 (VGGH). A Fido domain is found at 297–432 (ITIKDILELH…IRPFVRFIAD (136 aa)). The active site involves His375. ATP is bound by residues 379–386 (DGNGRTSR), 411–412 (YY), and Asn419.

This sequence belongs to the fic family. Homodimer.

The protein localises to the membrane. The catalysed reaction is L-tyrosyl-[protein] + ATP = O-(5'-adenylyl)-L-tyrosyl-[protein] + diphosphate. It carries out the reaction L-threonyl-[protein] + ATP = 3-O-(5'-adenylyl)-L-threonyl-[protein] + diphosphate. The enzyme catalyses 3-O-(5'-adenylyl)-L-threonyl-[protein] + H2O = L-threonyl-[protein] + AMP + H(+). Its activity is regulated as follows. The side chain of Glu-247 determines which of the two opposing activities (AMPylase or de-AMPylase) will take place. In response to endoplasmic reticulum stress, mediates de-AMPylase activity. Adenylyltransferase activity is inhibited by the inhibitory helix present at the N-terminus: Glu-247 binds ATP and competes with ATP-binding at Arg-386, thereby preventing adenylyltransferase activity. In unstressed cells, disengagement of Glu-247 promotes adenylyltransferase activity. Activation dissociates ATP-binding from Glu-247, allowing ordered binding of the entire ATP moiety with the alpha-phosphate in an orientation that is productive for accepting an incoming target hydroxyl side chain. Protein that can both mediate the addition of adenosine 5'-monophosphate (AMP) to specific residues of target proteins (AMPylation), and the removal of the same modification from target proteins (de-AMPylation), depending on the context. The side chain of Glu-247 determines which of the two opposing activities (AMPylase or de-AMPylase) will take place. Acts as a key regulator of the unfolded protein response (UPR) by mediating AMPylation or de-AMPylation of Hsc70-3/BiP. In unstressed cells, acts as an adenylyltransferase by mediating AMPylation of Hsc70-3/BiP at 'Thr-518', thereby inactivating it. In response to endoplasmic reticulum stress, acts as a phosphodiesterase by mediating removal of ATP (de-AMPylation) from Hsc70-3/BiP at 'Thr-518', leading to restore HSPA5/BiP activity. This Drosophila simulans (Fruit fly) protein is Protein adenylyltransferase Fic.